Here is a 334-residue protein sequence, read N- to C-terminus: Trans-O-hydroxybenzylidenepyruvate hydratase-aldolase (334 aa).

It belongs to the DapA family.

The catalysed reaction is (3E)-4-(2-hydroxyphenyl)-2-oxobut-3-enoate + H2O = salicylaldehyde + pyruvate. Its pathway is aromatic compound metabolism; naphthalene degradation. Involved in the naphthalene upper catabolic pathway. Catalyzes the transformation of trans-O-hydroxybenzylidenepyruvate (THBPA) to salicylaldehyde and pyruvate. The reaction is reversible. This chain is Trans-O-hydroxybenzylidenepyruvate hydratase-aldolase (pahE), found in Pseudomonas aeruginosa.